Reading from the N-terminus, the 357-residue chain is Carbamoyl phosphate synthase small chain (357 aa).

The interval 1–168 (MSKRLLILED…STTTAYPSPN (168 aa)) is CPSase. Positions 46, 220, and 222 each coordinate L-glutamine. A Glutamine amidotransferase type-1 domain is found at 172–357 (KVVVVDFGLK…FMDLMDNFKK (186 aa)). The Nucleophile role is filled by cysteine 247. The L-glutamine site is built by leucine 248, glutamine 251, asparagine 289, glycine 291, and tyrosine 292. Residues histidine 331 and aspartate 333 contribute to the active site.

It belongs to the CarA family. As to quaternary structure, composed of two chains; the small (or glutamine) chain promotes the hydrolysis of glutamine to ammonia, which is used by the large (or ammonia) chain to synthesize carbamoyl phosphate. Tetramer of heterodimers (alpha,beta)4.

It carries out the reaction hydrogencarbonate + L-glutamine + 2 ATP + H2O = carbamoyl phosphate + L-glutamate + 2 ADP + phosphate + 2 H(+). The enzyme catalyses L-glutamine + H2O = L-glutamate + NH4(+). The protein operates within amino-acid biosynthesis; L-arginine biosynthesis; carbamoyl phosphate from bicarbonate: step 1/1. Its pathway is pyrimidine metabolism; UMP biosynthesis via de novo pathway; (S)-dihydroorotate from bicarbonate: step 1/3. Functionally, small subunit of the glutamine-dependent carbamoyl phosphate synthetase (CPSase). CPSase catalyzes the formation of carbamoyl phosphate from the ammonia moiety of glutamine, carbonate, and phosphate donated by ATP, constituting the first step of 2 biosynthetic pathways, one leading to arginine and/or urea and the other to pyrimidine nucleotides. The small subunit (glutamine amidotransferase) binds and cleaves glutamine to supply the large subunit with the substrate ammonia. In Lactococcus lactis subsp. lactis (strain IL1403) (Streptococcus lactis), this protein is Carbamoyl phosphate synthase small chain.